Consider the following 461-residue polypeptide: Steroidogenic factor 1 (461 aa).

A DNA-binding region (nuclear receptor) is located at residues 10 to 85 (DELCPVCGDK…VGMRLEAVRA (76 aa)). The segment at 13-33 (CPVCGDKVSGYHYGLLTCESC) adopts an NR C4-type zinc-finger fold. Lysine 34, lysine 38, and lysine 72 each carry N6-acetyllysine. An NR C4-type zinc finger spans residues 49 to 73 (CTESQSCKIDKTLRKRCPFCRFQKC). Residue lysine 119 forms a Glycyl lysine isopeptide (Lys-Gly) (interchain with G-Cter in SUMO) linkage. The interval 119-153 (KLETGPPMGVPPPPPPPPDYMLPPGLHVPEPKGLA) is disordered. Residues 126–139 (MGVPPPPPPPPDYM) are compositionally biased toward pro residues. A Glycyl lysine isopeptide (Lys-Gly) (interchain with G-Cter in SUMO) cross-link involves residue lysine 194. At serine 203 the chain carries Phosphoserine; by CDK7. In terms of domain architecture, NR LBD spans 222–459 (GVPELILQLL…NLLIEMLQAK (238 aa)). The a 1,2-diacyl-sn-glycero-3-phosphocholine site is built by glycine 341, tyrosine 436, and lysine 440.

It belongs to the nuclear hormone receptor family. NR5 subfamily. As to quaternary structure, binds DNA as a monomer. Part of a complex consisting of SFPQ, NONO and NR5A1. Interacts with NR0B2. Interacts with DGKQ and CDK7. Binds to and activated by HIPK3. Acetylation stimulates the transcriptional activity. Post-translationally, sumoylation reduces CDK7-mediated phosphorylation on Ser-203. In terms of processing, phosphorylated on Ser-203 by CDK7. This phosphorylation promotes transcriptional activity.

Its subcellular location is the nucleus. Its function is as follows. Transcriptional activator. Seems to be essential for sexual differentiation and formation of the primary steroidogenic tissues. Binds to the Ad4 site found in the promoter region of steroidogenic P450 genes such as CYP11A, CYP11B and CYP21B. Also regulates the AMH/Muellerian inhibiting substance gene as well as the AHCH and STAR genes. 5'-YCAAGGYC-3' and 5'-RRAGGTCA-3' are the consensus sequences for the recognition by NR5A1. The SFPQ-NONO-NR5A1 complex binds to the CYP17 promoter and regulates basal and cAMP-dependent transcriptional activity. Binds phospholipids with a phosphatidylinositol (PI) headgroup, in particular PI(3,4)P2 and PI(3,4,5)P3. Activated by the phosphorylation of NR5A1 by HIPK3 leading to increased steroidogenic gene expression upon cAMP signaling pathway stimulation. The protein is Steroidogenic factor 1 (NR5A1) of Equus caballus (Horse).